A 435-amino-acid polypeptide reads, in one-letter code: AMSH-like protease sst2 (435 aa).

Over residues 162-181 (TDLLSPDSQKLSKSSSDLPQ) the composition is skewed to low complexity. The disordered stretch occupies residues 162-185 (TDLLSPDSQKLSKSSSDLPQFDYP). Position 192 is a phosphothreonine (Thr-192). One can recognise an MPN domain in the interval 262 to 392 (TIYLPKLLKK…FRLLDPEGLQ (131 aa)). 7 residues coordinate Zn(2+): His-341, His-343, Asp-354, His-356, Cys-397, His-404, and His-406. The JAMM motif signature appears at 341-354 (HTHPTQTCFMSSVD).

The protein belongs to the peptidase M67C family. Requires Zn(2+) as cofactor.

The protein localises to the cytoplasm. Its subcellular location is the endosome. Functionally, zinc metalloprotease that specifically cleaves 'Lys-63'-linked polyubiquitin chains. Does not cleave 'Lys-48'-linked polyubiquitin chains. Plays a role in the multivesicular body (MVB) sorting pathway. Required for ubiquitin-dependent sorting of proteins into the endosome and subsequent trafficking to the vacuole. May regulate MVB sorting through deubiquitination of ubiquitinated ESCRT proteins. The chain is AMSH-like protease sst2 (sst2) from Schizosaccharomyces pombe (strain 972 / ATCC 24843) (Fission yeast).